The following is a 262-amino-acid chain: Glycine and serine-rich protein 1 (262 aa).

Residues 1–21 (MVIKTSLTVLILGVLIAEVFC) form the signal peptide. A glycan (N-linked (GlcNAc...) asparagine) is linked at Asn-59. The interval 172-212 (SNGGWGAETGSSGGMNSQSSGSQSGSWGSSSGSWGGSSGSM) is disordered. Gly residues predominate over residues 174-184 (GGWGAETGSSG). The span at 185–203 (GMNSQSSGSQSGSWGSSSG) shows a compositional bias: low complexity.

Component of the acid-insoluble and acid-soluble organic matrix of calcified layers of the shell (at protein level).

It localises to the secreted. This Lottia gigantea (Giant owl limpet) protein is Glycine and serine-rich protein 1.